Reading from the N-terminus, the 100-residue chain is Large ribosomal subunit protein bL27 (100 aa).

Positions 1 to 13 (MNKLYWLTDLQLF) are excised as a propeptide. A compositionally biased stretch (basic and acidic residues) spans 18-29 (GVDSSKNGRDSN). The tract at residues 18-39 (GVDSSKNGRDSNPKYLGAKLGD) is disordered.

It belongs to the bacterial ribosomal protein bL27 family. The N-terminus is cleaved by ribosomal processing cysteine protease Prp.

In Ureaplasma urealyticum serovar 10 (strain ATCC 33699 / Western), this protein is Large ribosomal subunit protein bL27.